A 130-amino-acid chain; its full sequence is Small ribosomal subunit protein uS9 (130 aa).

Belongs to the universal ribosomal protein uS9 family.

The sequence is that of Small ribosomal subunit protein uS9 from Shewanella loihica (strain ATCC BAA-1088 / PV-4).